The sequence spans 65 residues: Large ribosomal subunit protein bL35 (65 aa).

Positions Met-1–Phe-22 are disordered. The segment covering Ala-10–Phe-22 has biased composition (basic residues).

Belongs to the bacterial ribosomal protein bL35 family.

In Klebsiella pneumoniae (strain 342), this protein is Large ribosomal subunit protein bL35.